We begin with the raw amino-acid sequence, 389 residues long: 5-hydroxytryptamine receptor 1B (389 aa).

The disordered stretch occupies residues 1-27; sequence MEETNTHCAPPPPAGSQTGVSQANLSS. Over 1–45 the chain is Extracellular; the sequence is MEETNTHCAPPPPAGSQTGVSQANLSSAPPNCSTEGYIYQDSIAL. A compositionally biased stretch (polar residues) spans 15–27; that stretch reads GSQTGVSQANLSS. N-linked (GlcNAc...) asparagine glycans are attached at residues Asn-24 and Asn-31. A helical transmembrane segment spans residues 46–71; it reads PWKVLLILVLALFTLATTLSNAFVIA. Over 72-85 the chain is Cytoplasmic; the sequence is TVYRTRKLHTPANY. A helical transmembrane segment spans residues 86–110; that stretch reads LIASLAVTDLLVSILVMPISTMYTV. The Extracellular segment spans residues 111–118; the sequence is TGRWTLGQ. The chain crosses the membrane as a helical span at residues 119-144; the sequence is VVCDFWLSSDITCCTASILHLCVIAL. The cysteines at positions 121 and 198 are disulfide-linked. Residues Asp-128 and Thr-133 each coordinate ergotamine. Residues 145–147 carry the DRY motif; important for ligand-induced conformation changes and signaling motif; that stretch reads DRY. Residues 145 to 164 lie on the Cytoplasmic side of the membrane; the sequence is DRYWAITDAVEYSAKRTPKR. A helical transmembrane segment spans residues 165–183; the sequence is AAVMIALVWVFSISISLPP. Over 184-204 the chain is Extracellular; it reads FFWRQAKAEEEVSDCRVNTDH. Residue Val-200 coordinates ergotamine. Residues 205–228 traverse the membrane as a helical segment; it reads MLYTVYSTVGAFYFPTLLLIALYG. Residues 229–314 lie on the Cytoplasmic side of the membrane; that stretch reads RIYVEARSRI…AARERKATKT (86 aa). The segment covering 258 to 271 has biased composition (polar residues); sequence DSPGSTSSVTSVNS. The tract at residues 258 to 281 is disordered; that stretch reads DSPGSTSSVTSVNSRAPDVPSESG. A helical transmembrane segment spans residues 315–336; that stretch reads LGIILGAFIVCWLPFFIISLVM. Residues 337 to 346 are Extracellular-facing; it reads PICKDACWFH. Residues 347–369 traverse the membrane as a helical segment; it reads LAIFDFFTWLGYLNSLINPIIYT. Residues 364–368 carry the NPxxY motif; important for ligand-induced conformation changes and signaling motif; it reads NPIIY. At 370 to 389 the chain is on the cytoplasmic side; the sequence is MSNEDFKQAFHKLIRFKCTG. Cys-387 carries the S-palmitoyl cysteine lipid modification.

The protein belongs to the G-protein coupled receptor 1 family. As to quaternary structure, homodimer. Heterodimer with HTR1D. In terms of processing, phosphorylated. Desensitization of the receptor may be mediated by its phosphorylation. Post-translationally, palmitoylated.

It localises to the cell membrane. Functionally, G-protein coupled receptor for 5-hydroxytryptamine (serotonin). Also functions as a receptor for ergot alkaloid derivatives, various anxiolytic and antidepressant drugs and other psychoactive substances, such as lysergic acid diethylamide (LSD). Ligand binding causes a conformation change that triggers signaling via guanine nucleotide-binding proteins (G proteins) and modulates the activity of downstream effectors, such as adenylate cyclase. HTR1B is coupled to G(i)/G(o) G alpha proteins and mediates inhibitory neurotransmission by inhibiting adenylate cyclase activity. Arrestin family members inhibit signaling via G proteins and mediate activation of alternative signaling pathways. Regulates the release of 5-hydroxytryptamine, dopamine and acetylcholine in the brain, and thereby affects neural activity, nociceptive processing, pain perception, mood and behavior. Besides, plays a role in vasoconstriction of cerebral arteries. The sequence is that of 5-hydroxytryptamine receptor 1B (HTR1B) from Felis catus (Cat).